The following is a 176-amino-acid chain: Membrane glycoprotein UL144 (176 aa).

The first 20 residues, 1–20 (MKPLVMLICFGVILLQLGVT), serve as a signal peptide directing secretion. One copy of the TNFR-Cys repeat lies at 58–95 (PCPNGTYVSGLYNCTDCTQCNVTQVMIRNCTSTNNTVC). Disulfide bonds link Cys59/Cys71, Cys74/Cys87, and Cys77/Cys95. A helical transmembrane segment spans residues 134–154 (LAWLSLFIFLVGIILLILYLI).

As to quaternary structure, interacts with host TRIM23; this interaction causes auto-ubiquitination of TRAF6, leading to NF-kappaB activation.

The protein localises to the membrane. Its function is as follows. Activates NF-kappa-B in a tumor necrosis factor receptor (TNFR)-associated factor 6 (TRAF6)-dependent manner, causing the up-regulation of the chemokine CCL22. The protein is Membrane glycoprotein UL144 (UL144) of Human cytomegalovirus (strain Merlin) (HHV-5).